The sequence spans 324 residues: bZIP transcription factor 46 (324 aa).

The interval 106 to 127 (LGGSDDEDPAAAAAAAAPAQRQ) is disordered. Residues 115–124 (AAAAAAAAPA) show a composition bias toward low complexity. Residues 242-287 (VERRQRRMIKNRESAARSRARKQAYIMELEAEVAKLKEQKAELQKK) enclose the bZIP domain. Residues 244–263 (RRQRRMIKNRESAARSRARK) form a basic motif region. Residues 270 to 284 (LEAEVAKLKEQKAEL) form a leucine-zipper region.

Interacts with MODD. Interacts with SAPK2, SAPK6 and SAPK9. Post-translationally, phosphorylated on serine and threonine residues by SAPK2, SAPK6 and SAPK9. Phosphorylation is required for full transactivation activity. Expressed in roots, shoots, leaves, flag leaves, stems, flowers and panicles. Widely expressed.

It localises to the nucleus. Transcription factor involved in abscisic acid (ABA) signaling pathway. Transcription factor activity is fully activated by ABA. Acts as a positive regulator of the expression of abiotic stress-responsive genes through an ABA-dependent signaling pathway. Acts as a positive regulator of ABA signaling and drought stress tolerance. Plays an important role in ABA and auxin responses. Involved in ABA signaling and stress responses by directly binding to the ABA-responsive element (ABRE)-containing genes, especially WRKY family genes. Modulates response to auxin. Suppresses auxin signaling by targeting ABRE-containing genes related to auxin metabolism or signaling. The protein is bZIP transcription factor 46 of Oryza sativa subsp. japonica (Rice).